The following is a 370-amino-acid chain: Ganglioside-induced differentiation-associated protein 1-like 1 (370 aa).

In terms of domain architecture, GST N-terminal spans 45–129 (ESLVLYHWTQ…YVERTFTGEH (85 aa)). The 168-residue stretch at 177-344 (PKYATAEIRR…RLVKRKPPSF (168 aa)) folds into the GST C-terminal domain.

Belongs to the GST superfamily.

The polypeptide is Ganglioside-induced differentiation-associated protein 1-like 1 (Gdap1l1) (Mus musculus (Mouse)).